A 572-amino-acid polypeptide reads, in one-letter code: MLKNPHTKYRPANPFAGVVPGGRGLSDRTWPDNTITRPPVWMSTDLRDGNQALFEPMNSERKMRMFKMLVEIGLKEIEVAFPAASQTDFDFVRELIEGGHIPDDVTIEVLTQARPHLIERTFESVRGAKRAIVHVYNAVAPNFRRIVFDTDRAGVKQIAVDSARYFVEMAARQPGTDFTFQYSPEVFSGTELDFAVEVANAVIEVWQPTPQQKCIINLPATVEMSTPNVYADQIEWMHRHLARRDSVLLSVHPHNDRGTAVAAAELAVMAGADRVEGCLFGNGERTGNVDLVTLALNLYSQGVHPGLDFSRINEVARTVEHCTQLPIHPRHPYVGDLVFTAFSGSHQDAIKKGFAVQQPDAVWEVPYLPVDPADLGRSYESIIRVNSQSGKGGIAYLLEAEYGLVMPRRLQVEFSAAIQRITDERGTELSAGDIWRAFEEEYLAVAAPYAYVEHHLAEHGGQQGISLTVEEAGVRRVLRGVGNGPIDAALHALDAGAVLLGYEERAIGQGGDARAVAYIELADGEGGGSTFGVGIHANIVTASVLAIVSALDRLAQRRERADGVGRQVAATR.

Residues 39-313 (PVWMSTDLRD…HPGLDFSRIN (275 aa)) enclose the Pyruvate carboxyltransferase domain. Mg(2+)-binding residues include Asp-48, His-252, His-254, and Asn-288. Positions 445–572 (VAAPYAYVEH…GVGRQVAATR (128 aa)) are regulatory domain.

It belongs to the alpha-IPM synthase/homocitrate synthase family. LeuA type 2 subfamily. In terms of assembly, homodimer. Mg(2+) serves as cofactor.

The protein localises to the cytoplasm. The catalysed reaction is 3-methyl-2-oxobutanoate + acetyl-CoA + H2O = (2S)-2-isopropylmalate + CoA + H(+). It functions in the pathway amino-acid biosynthesis; L-leucine biosynthesis; L-leucine from 3-methyl-2-oxobutanoate: step 1/4. In terms of biological role, catalyzes the condensation of the acetyl group of acetyl-CoA with 3-methyl-2-oxobutanoate (2-ketoisovalerate) to form 3-carboxy-3-hydroxy-4-methylpentanoate (2-isopropylmalate). This Azoarcus sp. (strain BH72) protein is 2-isopropylmalate synthase.